The primary structure comprises 151 residues: uncharacterized protein (151 aa).

This is an uncharacterized protein from Rhizobium meliloti (strain 1021) (Ensifer meliloti).